The following is a 340-amino-acid chain: UDP-N-acetylglucosamine--N-acetylmuramyl-(pentapeptide) pyrophosphoryl-undecaprenol N-acetylglucosamine transferase (340 aa).

UDP-N-acetyl-alpha-D-glucosamine-binding positions include 10–12, Asn-124, Ser-179, and Gln-277; that span reads TGG.

Belongs to the glycosyltransferase 28 family. MurG subfamily.

The protein resides in the cell inner membrane. It catalyses the reaction di-trans,octa-cis-undecaprenyl diphospho-N-acetyl-alpha-D-muramoyl-L-alanyl-D-glutamyl-meso-2,6-diaminopimeloyl-D-alanyl-D-alanine + UDP-N-acetyl-alpha-D-glucosamine = di-trans,octa-cis-undecaprenyl diphospho-[N-acetyl-alpha-D-glucosaminyl-(1-&gt;4)]-N-acetyl-alpha-D-muramoyl-L-alanyl-D-glutamyl-meso-2,6-diaminopimeloyl-D-alanyl-D-alanine + UDP + H(+). It functions in the pathway cell wall biogenesis; peptidoglycan biosynthesis. In terms of biological role, cell wall formation. Catalyzes the transfer of a GlcNAc subunit on undecaprenyl-pyrophosphoryl-MurNAc-pentapeptide (lipid intermediate I) to form undecaprenyl-pyrophosphoryl-MurNAc-(pentapeptide)GlcNAc (lipid intermediate II). In Sulfurimonas denitrificans (strain ATCC 33889 / DSM 1251) (Thiomicrospira denitrificans (strain ATCC 33889 / DSM 1251)), this protein is UDP-N-acetylglucosamine--N-acetylmuramyl-(pentapeptide) pyrophosphoryl-undecaprenol N-acetylglucosamine transferase.